The primary structure comprises 199 residues: Ribonuclease HII (199 aa).

The RNase H type-2 domain maps to 1–199 (MCVCGIDEAG…TYKNLVQGHI (199 aa)). Residues aspartate 7, glutamate 8, and aspartate 97 each contribute to the a divalent metal cation site.

The protein belongs to the RNase HII family. It depends on Mn(2+) as a cofactor. The cofactor is Mg(2+).

It localises to the cytoplasm. The enzyme catalyses Endonucleolytic cleavage to 5'-phosphomonoester.. Its function is as follows. Endonuclease that specifically degrades the RNA of RNA-DNA hybrids. This is Ribonuclease HII from Picrophilus torridus (strain ATCC 700027 / DSM 9790 / JCM 10055 / NBRC 100828 / KAW 2/3).